The primary structure comprises 476 residues: Glutamyl-tRNA(Gln) amidotransferase subunit A (476 aa).

Residues Lys77 and Ser152 each act as charge relay system in the active site. The active-site Acyl-ester intermediate is Ser176.

Belongs to the amidase family. GatA subfamily. As to quaternary structure, heterotrimer of A, B and C subunits.

It carries out the reaction L-glutamyl-tRNA(Gln) + L-glutamine + ATP + H2O = L-glutaminyl-tRNA(Gln) + L-glutamate + ADP + phosphate + H(+). Functionally, allows the formation of correctly charged Gln-tRNA(Gln) through the transamidation of misacylated Glu-tRNA(Gln) in organisms which lack glutaminyl-tRNA synthetase. The reaction takes place in the presence of glutamine and ATP through an activated gamma-phospho-Glu-tRNA(Gln). The polypeptide is Glutamyl-tRNA(Gln) amidotransferase subunit A (Acidobacterium capsulatum (strain ATCC 51196 / DSM 11244 / BCRC 80197 / JCM 7670 / NBRC 15755 / NCIMB 13165 / 161)).